Consider the following 860-residue polypeptide: Leucine--tRNA ligase (860 aa).

Positions 42 to 52 (PYPSGRLHMGH) match the 'HIGH' region motif. The short motif at 619–623 (KMSKS) is the 'KMSKS' region element. K622 is a binding site for ATP.

It belongs to the class-I aminoacyl-tRNA synthetase family.

The protein resides in the cytoplasm. It carries out the reaction tRNA(Leu) + L-leucine + ATP = L-leucyl-tRNA(Leu) + AMP + diphosphate. This chain is Leucine--tRNA ligase, found in Actinobacillus succinogenes (strain ATCC 55618 / DSM 22257 / CCUG 43843 / 130Z).